A 160-amino-acid chain; its full sequence is Complexin-4 (160 aa).

The interval 14–44 (KNLGFGGGSEEKKEEGGTSDPAAAKGMTREE) is disordered. Cysteine methyl ester is present on Cys-157. Cys-157 is lipidated: S-farnesyl cysteine. A propeptide spans 158-160 (SVM) (removed in mature form).

This sequence belongs to the complexin/synaphin family. As to quaternary structure, weakly binds to the SNARE core complex containing SNAP25, VAMP2 and STX1A. In terms of processing, farnesylation mediates presynaptic targeting and is important for function in neurotransmitter release. Present specifically in the retina (at protein level). Expressed in the outer nuclear layer of the retina (at protein level). Strongly expressed at rod photoreceptor ribbon synapses (at protein level). Not expressed at conventional amacrine cell synapses, nor at cone photoreceptor ribbon synapses (at protein level). Weakly expressed at cone photoreceptor synaptic terminals (at protein level). Not expressed in the brain (at protein level).

The protein localises to the synapse. It localises to the cell membrane. Its function is as follows. Complexin that regulates SNARE protein complex-mediated synaptic vesicle fusion. Required for the maintenance of synaptic ultrastructure in the adult retina. Positively regulates synaptic transmission through synaptic vesicle availability and exocytosis of neurotransmitters at photoreceptor ribbon synapses in the retina. Suppresses tonic photoreceptor activity and baseline 'noise' by suppression of Ca(2+) vesicle tonic release and the facilitation of evoked synchronous and asynchronous Ca(2+) vesicle release. The protein is Complexin-4 (Cplx4) of Mus musculus (Mouse).